A 387-amino-acid polypeptide reads, in one-letter code: 3-ketoacyl-CoA thiolase (387 aa).

C91 (acyl-thioester intermediate) is an active-site residue. Catalysis depends on proton acceptor residues H343 and C373.

This sequence belongs to the thiolase-like superfamily. Thiolase family. As to quaternary structure, heterotetramer of two alpha chains (FadB) and two beta chains (FadA).

It localises to the cytoplasm. The catalysed reaction is an acyl-CoA + acetyl-CoA = a 3-oxoacyl-CoA + CoA. It participates in lipid metabolism; fatty acid beta-oxidation. In terms of biological role, catalyzes the final step of fatty acid oxidation in which acetyl-CoA is released and the CoA ester of a fatty acid two carbons shorter is formed. This chain is 3-ketoacyl-CoA thiolase, found in Shewanella oneidensis (strain ATCC 700550 / JCM 31522 / CIP 106686 / LMG 19005 / NCIMB 14063 / MR-1).